Reading from the N-terminus, the 108-residue chain is UPF0060 membrane protein Mflv_3127 (108 aa).

A run of 4 helical transmembrane segments spans residues 7–27 (LLFVLAAVLEIGGAWLVWQGF), 32–52 (GWLWVGAGVLALGAYGFVAAF), 61–81 (VLAAYGGVFVAGSLIWGMVAD), and 87–107 (RWDITGAAVCLLGVVLIMYAP).

The protein belongs to the UPF0060 family.

The protein localises to the cell membrane. This Mycolicibacterium gilvum (strain PYR-GCK) (Mycobacterium gilvum (strain PYR-GCK)) protein is UPF0060 membrane protein Mflv_3127.